The primary structure comprises 263 residues: Type III pantothenate kinase (263 aa).

9–16 (DIGNTNVK) is an ATP binding site. Substrate-binding positions include Y103 and 110-113 (GADR). Catalysis depends on D112, which acts as the Proton acceptor. D134 provides a ligand contact to K(+). Position 137 (T137) interacts with ATP. T190 is a substrate binding site.

This sequence belongs to the type III pantothenate kinase family. Homodimer. It depends on NH4(+) as a cofactor. K(+) serves as cofactor.

Its subcellular location is the cytoplasm. The catalysed reaction is (R)-pantothenate + ATP = (R)-4'-phosphopantothenate + ADP + H(+). The protein operates within cofactor biosynthesis; coenzyme A biosynthesis; CoA from (R)-pantothenate: step 1/5. Catalyzes the phosphorylation of pantothenate (Pan), the first step in CoA biosynthesis. This is Type III pantothenate kinase from Oleidesulfovibrio alaskensis (strain ATCC BAA-1058 / DSM 17464 / G20) (Desulfovibrio alaskensis).